A 261-amino-acid chain; its full sequence is Global transcriptional regulator CodY (261 aa).

A GAF domain region spans residues 1–159; sequence MPNLLEKTRK…ASTVVGIQLL (159 aa). A DNA-binding region (H-T-H motif) is located at residues 207–226; the sequence is ASVIADRIGITRSVIVNALR.

It belongs to the CodY family.

It localises to the cytoplasm. In terms of biological role, DNA-binding global transcriptional regulator which is involved in the adaptive response to starvation and acts by directly or indirectly controlling the expression of numerous genes in response to nutrient availability. During rapid exponential growth, CodY is highly active and represses genes whose products allow adaptation to nutrient depletion. This chain is Global transcriptional regulator CodY, found in Streptococcus agalactiae serotype Ia (strain ATCC 27591 / A909 / CDC SS700).